A 120-amino-acid chain; its full sequence is Large ribosomal subunit protein uL18 (120 aa).

This sequence belongs to the universal ribosomal protein uL18 family. As to quaternary structure, part of the 50S ribosomal subunit; part of the 5S rRNA/L5/L18/L25 subcomplex. Contacts the 5S and 23S rRNAs.

Its function is as follows. This is one of the proteins that bind and probably mediate the attachment of the 5S RNA into the large ribosomal subunit, where it forms part of the central protuberance. The sequence is that of Large ribosomal subunit protein uL18 from Geobacillus thermodenitrificans (strain NG80-2).